A 219-amino-acid chain; its full sequence is tRNA (guanine-N(7)-)-methyltransferase (219 aa).

4 residues coordinate S-adenosyl-L-methionine: Glu44, Asp69, Glu102, and Asn125. Residues Lys129 and Asp161 each contribute to the substrate site.

Belongs to the class I-like SAM-binding methyltransferase superfamily. TrmB family.

It carries out the reaction guanosine(46) in tRNA + S-adenosyl-L-methionine = N(7)-methylguanosine(46) in tRNA + S-adenosyl-L-homocysteine. It functions in the pathway tRNA modification; N(7)-methylguanine-tRNA biosynthesis. Functionally, catalyzes the formation of N(7)-methylguanine at position 46 (m7G46) in tRNA. The polypeptide is tRNA (guanine-N(7)-)-methyltransferase (Clostridium perfringens (strain 13 / Type A)).